Reading from the N-terminus, the 276-residue chain is Lipoyl synthase (276 aa).

[4Fe-4S] cluster is bound by residues Cys-27, Cys-32, Cys-38, Cys-53, Cys-57, Cys-60, and Ser-266. The region spanning Phe-39 to Lys-255 is the Radical SAM core domain.

The protein belongs to the radical SAM superfamily. Lipoyl synthase family. Requires [4Fe-4S] cluster as cofactor.

The protein resides in the cytoplasm. It catalyses the reaction [[Fe-S] cluster scaffold protein carrying a second [4Fe-4S](2+) cluster] + N(6)-octanoyl-L-lysyl-[protein] + 2 oxidized [2Fe-2S]-[ferredoxin] + 2 S-adenosyl-L-methionine + 4 H(+) = [[Fe-S] cluster scaffold protein] + N(6)-[(R)-dihydrolipoyl]-L-lysyl-[protein] + 4 Fe(3+) + 2 hydrogen sulfide + 2 5'-deoxyadenosine + 2 L-methionine + 2 reduced [2Fe-2S]-[ferredoxin]. It functions in the pathway protein modification; protein lipoylation via endogenous pathway; protein N(6)-(lipoyl)lysine from octanoyl-[acyl-carrier-protein]: step 2/2. In terms of biological role, catalyzes the radical-mediated insertion of two sulfur atoms into the C-6 and C-8 positions of the octanoyl moiety bound to the lipoyl domains of lipoate-dependent enzymes, thereby converting the octanoylated domains into lipoylated derivatives. The sequence is that of Lipoyl synthase from Aquifex aeolicus (strain VF5).